The following is a 284-amino-acid chain: MAVVTMKQLLDSGTHFGHQTRRWNPKMKRFIFTDRNGIYIIDLQQTLTYIDKAYEFVKETVAHGGSIMFVGTKKQAQESIAEEATRVGMPYVNQRWLGGMLTNFSTVHKRLQRLKELEAMEQTGGFEGRTKKEILMLTREKNKLERSLGGIRDMQKVPSAIWVVDTNKEHLAVAEARKLNIPIIAILDTNCDPDVVDYPIPGNDDAIRSAALLTKVVASAVAEGLQARAGGGNGNKPEAEAAEPLAEWEQELLAGATASPTAAGAAPGTPEADIQTEPTAPQNP.

Positions 250 to 272 are enriched in low complexity; the sequence is QELLAGATASPTAAGAAPGTPEA. Positions 250–284 are disordered; the sequence is QELLAGATASPTAAGAAPGTPEADIQTEPTAPQNP.

It belongs to the universal ribosomal protein uS2 family.

The polypeptide is Small ribosomal subunit protein uS2 (Mycobacterium sp. (strain KMS)).